The following is a 462-amino-acid chain: RuvB-like 2 (462 aa).

76-83 contacts ATP; the sequence is GQPGTGKT.

It belongs to the RuvB family. As to quaternary structure, forms homohexameric rings. Can form a dodecamer with ruvbl2 made of two stacked hexameric rings. Is a component of the RNA polymerase II holoenzyme complex. Component of the chromatin-remodeling Ino80 complex. Component of some MLL1/MLL complex.

It localises to the nucleus. Its subcellular location is the dynein axonemal particle. The catalysed reaction is ATP + H2O = ADP + phosphate + H(+). Functionally, has single-stranded DNA-stimulated ATPase and ATP-dependent DNA helicase (5' to 3') activity suggesting a role in nuclear processes such as recombination and transcription. Proposed core component of the chromatin remodeling INO80 complex which exhibits DNA- and nucleosome-activated ATPase activity and catalyzes ATP-dependent nucleosome sliding. Involved in the endoplasmic reticulum (ER)-associated degradation (ERAD) pathway where it negatively regulates expression of ER stress response genes. The protein is RuvB-like 2 (ruvbl2) of Xenopus laevis (African clawed frog).